A 945-amino-acid polypeptide reads, in one-letter code: Valine--tRNA ligase (945 aa).

Residues 42–52 (PNVTGTLHMGH) carry the 'HIGH' region motif. Positions 552 to 556 (KMSKS) match the 'KMSKS' region motif. An ATP-binding site is contributed by K555. Residues 879–945 (DKAAETARLS…VQNQLAKLKD (67 aa)) are a coiled coil.

Belongs to the class-I aminoacyl-tRNA synthetase family. ValS type 1 subfamily. In terms of assembly, monomer.

It localises to the cytoplasm. The enzyme catalyses tRNA(Val) + L-valine + ATP = L-valyl-tRNA(Val) + AMP + diphosphate. Functionally, catalyzes the attachment of valine to tRNA(Val). As ValRS can inadvertently accommodate and process structurally similar amino acids such as threonine, to avoid such errors, it has a 'posttransfer' editing activity that hydrolyzes mischarged Thr-tRNA(Val) in a tRNA-dependent manner. In Neisseria gonorrhoeae (strain ATCC 700825 / FA 1090), this protein is Valine--tRNA ligase.